The primary structure comprises 188 residues: Pro-FMRFamide-related neuropeptide VF (188 aa).

Residues 1 to 26 (MEIISLKRFILLTVATSSFLTSNTFC) form the signal peptide. A propeptide spanning residues 27 to 57 (TDEFMMPHFHSKEGDGKYSQLRGIPKGEKER) is cleaved from the precursor. Phenylalanine 94 is modified (phenylalanine amide). The propeptide occupies 97-106 (TIDEKRSPAA). Disordered stretches follow at residues 116–144 (SHFP…QKPL) and 163–188 (IQSP…KPEK). Phenylalanine 125 is modified (phenylalanine amide). The propeptide occupies 128–188 (TTARSPKTPA…TDDAERKPEK (61 aa)).

Belongs to the FARP (FMRFamide related peptide) family.

The protein resides in the secreted. Functionally, efficiently inhibits forskolin-induced production of cAMP. Acts as a potent negative regulator of gonadotropin synthesis and secretion. Induces secretion of prolactin. Efficiently inhibits forskolin-induced production of cAMP. Blocks morphine-induced analgesia. The polypeptide is Pro-FMRFamide-related neuropeptide VF (Npvf) (Mus musculus (Mouse)).